The chain runs to 394 residues: Xylose isomerase (394 aa).

Residues histidine 54 and aspartate 57 contribute to the active site. Mg(2+)-binding residues include glutamate 180, glutamate 216, histidine 219, aspartate 244, aspartate 254, aspartate 256, and aspartate 285. Residues 370-394 form a disordered region; that stretch reads VRTPRPAGDGPPAGRARLTVAPRKR. The segment covering 373–386 has biased composition (low complexity); the sequence is PRPAGDGPPAGRAR.

The protein belongs to the xylose isomerase family. As to quaternary structure, homotetramer. The cofactor is Mg(2+).

It is found in the cytoplasm. The catalysed reaction is alpha-D-xylose = alpha-D-xylulofuranose. Its function is as follows. Involved in D-xylose catabolism. The polypeptide is Xylose isomerase (xylA) (Streptomyces rochei (Streptomyces parvullus)).